Here is a 151-residue protein sequence, read N- to C-terminus: Small ribosomal subunit protein uS11 (151 aa).

S16 carries the post-translational modification Phosphoserine. Residues K61, K63, and K106 each participate in a glycyl lysine isopeptide (Lys-Gly) (interchain with G-Cter in SUMO2) cross-link. Residues 131-151 are disordered; the sequence is DVTPIPSDSTRRKGGRRGRRL. A Phosphothreonine modification is found at T133. Residue S139 is modified to Phosphoserine. A compositionally biased stretch (basic residues) spans 142–151; the sequence is RKGGRRGRRL.

The protein belongs to the universal ribosomal protein uS11 family. As to quaternary structure, component of the small ribosomal subunit. Part of the small subunit (SSU) processome, composed of more than 70 proteins and the RNA chaperone small nucleolar RNA (snoRNA) U3.

The protein resides in the cytoplasm. Its subcellular location is the nucleus. The protein localises to the nucleolus. In terms of biological role, component of the small ribosomal subunit. The ribosome is a large ribonucleoprotein complex responsible for the synthesis of proteins in the cell. Part of the small subunit (SSU) processome, first precursor of the small eukaryotic ribosomal subunit. During the assembly of the SSU processome in the nucleolus, many ribosome biogenesis factors, an RNA chaperone and ribosomal proteins associate with the nascent pre-rRNA and work in concert to generate RNA folding, modifications, rearrangements and cleavage as well as targeted degradation of pre-ribosomal RNA by the RNA exosome. This Mus musculus (Mouse) protein is Small ribosomal subunit protein uS11 (Rps14).